The primary structure comprises 182 residues: ATP synthase subunit delta (182 aa).

This sequence belongs to the ATPase delta chain family. F-type ATPases have 2 components, F(1) - the catalytic core - and F(0) - the membrane proton channel. F(1) has five subunits: alpha(3), beta(3), gamma(1), delta(1), epsilon(1). CF(0) has four main subunits: a(1), b(1), b'(1) and c(10-14). The alpha and beta chains form an alternating ring which encloses part of the gamma chain. F(1) is attached to F(0) by a central stalk formed by the gamma and epsilon chains, while a peripheral stalk is formed by the delta, b and b' chains.

The protein resides in the cellular thylakoid membrane. F(1)F(0) ATP synthase produces ATP from ADP in the presence of a proton or sodium gradient. F-type ATPases consist of two structural domains, F(1) containing the extramembraneous catalytic core and F(0) containing the membrane proton channel, linked together by a central stalk and a peripheral stalk. During catalysis, ATP synthesis in the catalytic domain of F(1) is coupled via a rotary mechanism of the central stalk subunits to proton translocation. In terms of biological role, this protein is part of the stalk that links CF(0) to CF(1). It either transmits conformational changes from CF(0) to CF(1) or is implicated in proton conduction. The chain is ATP synthase subunit delta from Synechococcus sp. (strain JA-2-3B'a(2-13)) (Cyanobacteria bacterium Yellowstone B-Prime).